Reading from the N-terminus, the 313-residue chain is Ribose-phosphate pyrophosphokinase (313 aa).

ATP contacts are provided by residues 40 to 42 and 98 to 99; these read DGE and RQ. 2 residues coordinate Mg(2+): His-132 and Asp-172. Lys-195 is an active-site residue. D-ribose 5-phosphate contacts are provided by residues Arg-197, Asp-221, and 225-229; that span reads DTAGT.

Belongs to the ribose-phosphate pyrophosphokinase family. Class I subfamily. As to quaternary structure, homohexamer. Mg(2+) serves as cofactor.

It is found in the cytoplasm. The enzyme catalyses D-ribose 5-phosphate + ATP = 5-phospho-alpha-D-ribose 1-diphosphate + AMP + H(+). Its pathway is metabolic intermediate biosynthesis; 5-phospho-alpha-D-ribose 1-diphosphate biosynthesis; 5-phospho-alpha-D-ribose 1-diphosphate from D-ribose 5-phosphate (route I): step 1/1. In terms of biological role, involved in the biosynthesis of the central metabolite phospho-alpha-D-ribosyl-1-pyrophosphate (PRPP) via the transfer of pyrophosphoryl group from ATP to 1-hydroxyl of ribose-5-phosphate (Rib-5-P). The chain is Ribose-phosphate pyrophosphokinase from Porphyromonas gingivalis (strain ATCC BAA-308 / W83).